The chain runs to 167 residues: Lipoprotein signal peptidase (167 aa).

Helical transmembrane passes span 8–28 (TFLT…VVLL), 46–66 (WGHF…FGLF), 68–88 (QYKI…ALFL), and 101–121 (IALT…LLHG). Active-site residues include D125 and D143. The chain crosses the membrane as a helical span at residues 139–159 (FNLADAFISIGTLLLIGHLYF).

This sequence belongs to the peptidase A8 family.

The protein localises to the cell inner membrane. The catalysed reaction is Release of signal peptides from bacterial membrane prolipoproteins. Hydrolyzes -Xaa-Yaa-Zaa-|-(S,diacylglyceryl)Cys-, in which Xaa is hydrophobic (preferably Leu), and Yaa (Ala or Ser) and Zaa (Gly or Ala) have small, neutral side chains.. It participates in protein modification; lipoprotein biosynthesis (signal peptide cleavage). In terms of biological role, this protein specifically catalyzes the removal of signal peptides from prolipoproteins. This Chlamydia trachomatis serovar L2b (strain UCH-1/proctitis) protein is Lipoprotein signal peptidase.